Here is a 593-residue protein sequence, read N- to C-terminus: NADH-quinone oxidoreductase subunit C/D (593 aa).

Residues 1–184 (MTADSALYIP…DPYSLSAAKQ (184 aa)) are NADH dehydrogenase I subunit C. An NADH dehydrogenase I subunit D region spans residues 208-593 (DYMFLNLGPN…IDFVMADVDR (386 aa)).

It in the N-terminal section; belongs to the complex I 30 kDa subunit family. In the C-terminal section; belongs to the complex I 49 kDa subunit family. In terms of assembly, NDH-1 is composed of 13 different subunits. Subunits NuoB, CD, E, F, and G constitute the peripheral sector of the complex.

The protein resides in the cell inner membrane. It catalyses the reaction a quinone + NADH + 5 H(+)(in) = a quinol + NAD(+) + 4 H(+)(out). Functionally, NDH-1 shuttles electrons from NADH, via FMN and iron-sulfur (Fe-S) centers, to quinones in the respiratory chain. The immediate electron acceptor for the enzyme in this species is believed to be ubiquinone. Couples the redox reaction to proton translocation (for every two electrons transferred, four hydrogen ions are translocated across the cytoplasmic membrane), and thus conserves the redox energy in a proton gradient. This Pseudomonas aeruginosa (strain UCBPP-PA14) protein is NADH-quinone oxidoreductase subunit C/D.